The sequence spans 492 residues: Ketol-acid reductoisomerase (NADP(+)) (492 aa).

A KARI N-terminal Rossmann domain is found at 15–208 (AQLGKCRFMA…GAHRAGVLES (194 aa)). NADP(+) contacts are provided by residues 45-48 (CGAQ), Arg68, Arg76, Ser78, and 108-110 (DKQ). Residue His132 is part of the active site. Gly158 provides a ligand contact to NADP(+). KARI C-terminal knotted domains are found at residues 209-344 (SFVA…NSPE) and 345-485 (YDGK…MTDM). Mg(2+)-binding residues include Asp217, Glu221, Glu389, and Glu393. Ser414 serves as a coordination point for substrate.

Belongs to the ketol-acid reductoisomerase family. The cofactor is Mg(2+).

It carries out the reaction (2R)-2,3-dihydroxy-3-methylbutanoate + NADP(+) = (2S)-2-acetolactate + NADPH + H(+). The enzyme catalyses (2R,3R)-2,3-dihydroxy-3-methylpentanoate + NADP(+) = (S)-2-ethyl-2-hydroxy-3-oxobutanoate + NADPH + H(+). Its pathway is amino-acid biosynthesis; L-isoleucine biosynthesis; L-isoleucine from 2-oxobutanoate: step 2/4. It participates in amino-acid biosynthesis; L-valine biosynthesis; L-valine from pyruvate: step 2/4. Functionally, involved in the biosynthesis of branched-chain amino acids (BCAA). Catalyzes an alkyl-migration followed by a ketol-acid reduction of (S)-2-acetolactate (S2AL) to yield (R)-2,3-dihydroxy-isovalerate. In the isomerase reaction, S2AL is rearranged via a Mg-dependent methyl migration to produce 3-hydroxy-3-methyl-2-ketobutyrate (HMKB). In the reductase reaction, this 2-ketoacid undergoes a metal-dependent reduction by NADPH to yield (R)-2,3-dihydroxy-isovalerate. The chain is Ketol-acid reductoisomerase (NADP(+)) from Photorhabdus laumondii subsp. laumondii (strain DSM 15139 / CIP 105565 / TT01) (Photorhabdus luminescens subsp. laumondii).